Consider the following 147-residue polypeptide: Hemoglobin subunit gamma (147 aa).

Residues 3 to 147 (YFTAEEKAAI…VASALARKYH (145 aa)) form the Globin domain. Residues H64 and H93 each coordinate heme b.

This sequence belongs to the globin family. In terms of assembly, heterotetramer of two alpha chains and two gamma chains in fetal hemoglobin (Hb F). In terms of tissue distribution, red blood cells.

In terms of biological role, gamma chains make up the fetal hemoglobin F, in combination with alpha chains. This is Hemoglobin subunit gamma (HBG) from Dugong dugon (Dugong).